Reading from the N-terminus, the 61-residue chain is MAKKSMVVKNQRPAKFSTQAYTRCERCGRPHSVYRKFKLCRICLRELAYKGQLPGVKKASW.

4 residues coordinate Zn(2+): C24, C27, C40, and C43.

This sequence belongs to the universal ribosomal protein uS14 family. Zinc-binding uS14 subfamily. Part of the 30S ribosomal subunit. Contacts proteins S3 and S10. Zn(2+) is required as a cofactor.

Its function is as follows. Binds 16S rRNA, required for the assembly of 30S particles and may also be responsible for determining the conformation of the 16S rRNA at the A site. This Lactococcus lactis subsp. lactis (strain IL1403) (Streptococcus lactis) protein is Small ribosomal subunit protein uS14B.